The sequence spans 182 residues: Small ribosomal subunit protein uS5 (182 aa).

Residues 16-79 form the S5 DRBM domain; the sequence is FVDRLVHINR…EAAKRGMIYV (64 aa).

The protein belongs to the universal ribosomal protein uS5 family. As to quaternary structure, part of the 30S ribosomal subunit. Contacts proteins S4 and S8.

Its function is as follows. With S4 and S12 plays an important role in translational accuracy. In terms of biological role, located at the back of the 30S subunit body where it stabilizes the conformation of the head with respect to the body. The sequence is that of Small ribosomal subunit protein uS5 from Bartonella quintana (strain Toulouse) (Rochalimaea quintana).